Reading from the N-terminus, the 510-residue chain is Probable inorganic carbon transporter subunit DabB (510 aa).

A run of 14 helical transmembrane segments spans residues 9–29 (TLLTLFFIALSASWLSGLLFL), 37–57 (FVHIHIGIAALPSLVSLLALV), 68–88 (WHLDTLAWLMAFFVLTIGLII), 105–122 (YFALFTFTTGVSSVAWLS), 125–145 (LRFMIMCWGATLIGLVLLIGL), 158–178 (ISGYLFTISWIALLSAIIWLF), 204–224 (TGINLLIIVAVMIPAAQWPFQ), 226–246 (WLIESAVAPTPVSAIMHAGLV), 266–286 (QIILLIFSSISVLIGTGISLV), 303–323 (GFMLIQCALGAYLAAVIHLIL), 355–375 (LWMIVGRVLGLFIAIAFWFIT), 382–402 (LVSALILGWSLYFSWKQLVVF), 410–430 (IAGLIVLIGFSLIYFTVHNSL), and 446–466 (APAVIFVICILLFSSVICTFV).

This sequence belongs to the inorganic carbon transporter (TC 9.A.2) DabB family. As to quaternary structure, forms a complex with DabA.

It localises to the cell membrane. In terms of biological role, part of an energy-coupled inorganic carbon pump. Expression of both dabA and dabB (DA2) restores growth in ambient air to E.coli deleted of its carbonic anhydrase genes (called CAfree, deletion of 'can' and 'cynT'). The protein is Probable inorganic carbon transporter subunit DabB of Bacillus anthracis.